We begin with the raw amino-acid sequence, 485 residues long: NADH-quinone oxidoreductase subunit N (485 aa).

Transmembrane regions (helical) follow at residues 8–28, 35–55, 71–91, 105–125, 127–147, 159–179, 203–223, 235–255, 271–291, 297–317, 326–346, 373–393, 408–430, and 455–475; these read LIAL…MLSI, FLNA…LWFV, GFAM…CTFA, FYLL…ANHL, ALFL…GYAF, YTIL…LVYA, LLAG…LVPF, PAPV…GVVM, VVLG…ALSQ, LLGY…IALQ, VGVY…VVSL, AAVM…LGFI, WWLV…RVAV, and IVVL…QPLI.

It belongs to the complex I subunit 2 family. As to quaternary structure, NDH-1 is composed of 13 different subunits. Subunits NuoA, H, J, K, L, M, N constitute the membrane sector of the complex.

The protein localises to the cell inner membrane. It catalyses the reaction a quinone + NADH + 5 H(+)(in) = a quinol + NAD(+) + 4 H(+)(out). In terms of biological role, NDH-1 shuttles electrons from NADH, via FMN and iron-sulfur (Fe-S) centers, to quinones in the respiratory chain. The immediate electron acceptor for the enzyme in this species is believed to be ubiquinone. Couples the redox reaction to proton translocation (for every two electrons transferred, four hydrogen ions are translocated across the cytoplasmic membrane), and thus conserves the redox energy in a proton gradient. The protein is NADH-quinone oxidoreductase subunit N of Salmonella typhimurium (strain LT2 / SGSC1412 / ATCC 700720).